The following is a 224-amino-acid chain: MARYFILAVALLLTACSSTSKKPIADDPFYAPVYPEAPPTKIAATGSIYQDSQAASLYSDIRAHKVGDIITIVLKEATQAKKSAGNQIKKGSDMSLDPIYAGGSNVSIGGVPLDLRYKDSMNTKRESDADQSNSLDGSISANVMQVLNNGNLVVRGEKWISINNGDEFIRVTGIVRSQDIKPDNTIDSTRMANARIQYSGTGTFADAQKVGWLSQFFMSDWWPF.

A signal peptide spans 1–15 (MARYFILAVALLLTA). The N-palmitoyl cysteine moiety is linked to residue Cys16. Cys16 carries S-diacylglycerol cysteine lipidation.

The protein belongs to the FlgH family. As to quaternary structure, the basal body constitutes a major portion of the flagellar organelle and consists of four rings (L,P,S, and M) mounted on a central rod.

Its subcellular location is the cell outer membrane. The protein localises to the bacterial flagellum basal body. In terms of biological role, assembles around the rod to form the L-ring and probably protects the motor/basal body from shearing forces during rotation. The sequence is that of Flagellar L-ring protein from Shewanella sp. (strain MR-7).